Consider the following 360-residue polypeptide: Phosphoserine aminotransferase (360 aa).

Arg41 provides a ligand contact to L-glutamate. The pyridoxal 5'-phosphate site is built by Trp101, Thr152, Asp172, and Gln195. The residue at position 196 (Lys196) is an N6-(pyridoxal phosphate)lysine. Residue 237-238 (NT) participates in pyridoxal 5'-phosphate binding.

This sequence belongs to the class-V pyridoxal-phosphate-dependent aminotransferase family. SerC subfamily. As to quaternary structure, homodimer. Requires pyridoxal 5'-phosphate as cofactor.

It localises to the cytoplasm. It carries out the reaction O-phospho-L-serine + 2-oxoglutarate = 3-phosphooxypyruvate + L-glutamate. It catalyses the reaction 4-(phosphooxy)-L-threonine + 2-oxoglutarate = (R)-3-hydroxy-2-oxo-4-phosphooxybutanoate + L-glutamate. The protein operates within amino-acid biosynthesis; L-serine biosynthesis; L-serine from 3-phospho-D-glycerate: step 2/3. Its pathway is cofactor biosynthesis; pyridoxine 5'-phosphate biosynthesis; pyridoxine 5'-phosphate from D-erythrose 4-phosphate: step 3/5. Functionally, catalyzes the reversible conversion of 3-phosphohydroxypyruvate to phosphoserine and of 3-hydroxy-2-oxo-4-phosphonooxybutanoate to phosphohydroxythreonine. The chain is Phosphoserine aminotransferase from Burkholderia vietnamiensis (strain G4 / LMG 22486) (Burkholderia cepacia (strain R1808)).